The sequence spans 305 residues: Aurora/IPL1-related protein kinase 2 (305 aa).

The Protein kinase domain occupies 30–280 (FEIGRPLGKG…LEQVKEHYWI (251 aa)). ATP is bound by residues 36 to 44 (LGKGKFGSV) and Lys59. Asp153 acts as the Proton acceptor in catalysis.

Belongs to the protein kinase superfamily. Ser/Thr protein kinase family. Aurora subfamily. As to quaternary structure, component of the CPC complex which consists of icp-1; csc-1; bir-1 and air-2. Within the complex, interacts with icp-1; csc-1 and bir-1. Interacts with zen-4. Interacts with tlk-1 and bmk-1. Post-translationally, phosphorylated. Increased phosphorylation upon chromatin obstructions at anaphase.

The protein resides in the cytoplasm. The protein localises to the cytoskeleton. Its subcellular location is the chromosome. It is found in the midbody. It localises to the spindle. The catalysed reaction is L-seryl-[protein] + ATP = O-phospho-L-seryl-[protein] + ADP + H(+). It carries out the reaction L-threonyl-[protein] + ATP = O-phospho-L-threonyl-[protein] + ADP + H(+). Functionally, serine/threonine-protein kinase component of the chromosomal passenger complex (CPC), a complex that acts as a key regulator of chromosome segregation and cytokinesis. The CPC complex has essential functions at the centromere in ensuring correct chromosome alignment and segregation. Required for histone H3 phosphorylation during segregation of homologous chromosomes in meiosis and mitosis. Required for histone H3 'Ser-10' phosphorylation. Phosphorylates tlk-1 at 'Ser-634', which enhances its activity. Phosphorylates zen-4 at 'Ser-680'. Required for the recruitment of bub-1 to the ring-shaped domain between chromosomes during meiotic anaphase I. Also required for the localization of the condensin I complex subunit smc-4 to mitotic chromosomes. Acts at the spindle midzone and the midbody to prevent cleavage furrow regression upon chromatin obstructions during cytokinesis. The sequence is that of Aurora/IPL1-related protein kinase 2 from Caenorhabditis elegans.